The primary structure comprises 302 residues: Dioxygenase ALT11 (302 aa).

A disordered region spans residues 1 to 22 (MSSPELPSQMGVPNGHTKLQEV). Fe cation-binding residues include His147, Asp149, and His223.

This sequence belongs to the PhyH family. In terms of assembly, homodimer. Fe cation is required as a cofactor.

It participates in mycotoxin biosynthesis. Functionally, dioxygenase; part of the gene cluster that mediates the biosynthesis of the host-selective toxins (HSTs) AAL-toxins, sphinganine-analog mycotoxins responsible for Alternaria stem canker on tomato by the tomato pathotype. The biosynthesis starts with the polyketide synthase ALT1-catalyzed C-16 carbon chain assembly from one starter acetyl-CoA unit with malonyl-CoA extender units. ALT1 also selectively transfers methyl groups at the first and the third cycle of chain elongation for AAL toxin. The C-16 polyketide chain is released from the enzyme by a nucleophilic attack of a carbanion, which is derived from R-carbon of glycin by decarboxylation, on the carbonyl carbon of polyketide acyl chain. This step is probably catalyzed by a pyridoxal 5'-phosphate-dependent aminoacyl transferase ALT4. The respective functions of the other enzymes encoded by the cluster have still to be elucidated. The sphingosine N-acyltransferase-like protein ALT7 seems not to act as a resistance/self-tolerance factor against the toxin in the toxin biosynthetic gene cluster, contrary to what is expected. The protein is Dioxygenase ALT11 of Alternaria alternata (Alternaria rot fungus).